The following is a 151-amino-acid chain: D-aminoacyl-tRNA deacylase (151 aa).

The short motif at 142 to 143 is the Gly-cisPro motif, important for rejection of L-amino acids element; the sequence is GP.

It belongs to the DTD family. In terms of assembly, homodimer.

The protein resides in the cytoplasm. The catalysed reaction is glycyl-tRNA(Ala) + H2O = tRNA(Ala) + glycine + H(+). The enzyme catalyses a D-aminoacyl-tRNA + H2O = a tRNA + a D-alpha-amino acid + H(+). An aminoacyl-tRNA editing enzyme that deacylates mischarged D-aminoacyl-tRNAs. Also deacylates mischarged glycyl-tRNA(Ala), protecting cells against glycine mischarging by AlaRS. Acts via tRNA-based rather than protein-based catalysis; rejects L-amino acids rather than detecting D-amino acids in the active site. By recycling D-aminoacyl-tRNA to D-amino acids and free tRNA molecules, this enzyme counteracts the toxicity associated with the formation of D-aminoacyl-tRNA entities in vivo and helps enforce protein L-homochirality. This chain is D-aminoacyl-tRNA deacylase, found in Psychrobacter arcticus (strain DSM 17307 / VKM B-2377 / 273-4).